We begin with the raw amino-acid sequence, 419 residues long: Acyl-[acyl-carrier-protein] hydrolase FATB1, chloroplastic (419 aa).

The N-terminal 50 residues, 1–50 (MVAAAATSAFFPVPAPGTSPKPGKSGNWPSSLSPTFKPKSIPNGGFQVKA), are a transit peptide targeting the chloroplast. The segment at 1–84 (MVAAAATSAF…DTSSSPPPRA (84 aa)) is disordered. Positions 61–78 (SAVNLKSGSLNTQEDTSS) are enriched in polar residues. Residues Asn-315, His-317, and Cys-352 contribute to the active site. Residues 390-419 (SRTEWRPKNAGTNGAISTSTAKTSNGNSVS) are disordered. A compositionally biased stretch (polar residues) spans 399–419 (AGTNGAISTSTAKTSNGNSVS).

It belongs to the acyl-ACP thioesterase family.

It localises to the plastid. The protein localises to the chloroplast. The catalysed reaction is octanoyl-[ACP] + H2O = octanoate + holo-[ACP] + H(+). It catalyses the reaction decanoyl-[ACP] + H2O = decanoate + holo-[ACP] + H(+). Its function is as follows. Plays an essential role in chain termination during de novo fatty acid synthesis. Possesses thioesterase activity for short chain acyl-ACPs. Substrate preference is 8:0 &gt; 10:0. This is Acyl-[acyl-carrier-protein] hydrolase FATB1, chloroplastic from Cuphea viscosissima (Blue waxweed).